A 526-amino-acid polypeptide reads, in one-letter code: Transcription factor MYC1 (526 aa).

The segment at 330–351 is disordered; the sequence is MFPSQNSGLNQDDPSDRRKENE. The span at 332 to 341 shows a compositional bias: polar residues; that stretch reads PSQNSGLNQD. A bHLH domain is found at 333-382; it reads SQNSGLNQDDPSDRRKENEKFSVLRTMVPTVNEVDKESILNNTIKYLQEL.

As to quaternary structure, homodimer. Interacts with MYB75/PAP1, MYB90/PAP2, MYB4, MYB5, MYB6, MYB23, MYB82, MYB113, MYB114, TT2, MYB0/GL1, and MYB66/WER. Mostly expressed in developing seeds. Also detected in stems and leaves.

Its subcellular location is the nucleus. Trancsription activator, when associated with MYB75/PAP1 or MYB90/PAP2. The polypeptide is Transcription factor MYC1 (BHLH12) (Arabidopsis thaliana (Mouse-ear cress)).